A 312-amino-acid polypeptide reads, in one-letter code: Olfactory receptor 6C2 (312 aa).

The Extracellular portion of the chain corresponds to 1-23 (MKNHTVIRTFILLGLTGDPHLQV). N-linked (GlcNAc...) asparagine glycosylation is present at asparagine 3. Residues 24-44 (LLFIFLFLTYMLSVTGNLTII) form a helical membrane-spanning segment. Residues 45–52 (TLTLVDHH) lie on the Cytoplasmic side of the membrane. A helical membrane pass occupies residues 53 to 73 (LKTPMYFFLRNFSFLEVSFTT). Residues 74 to 97 (VCIPRFLYNISMGDNTITYNACAS) lie on the Extracellular side of the membrane. A glycan (N-linked (GlcNAc...) asparagine) is linked at asparagine 82. A disulfide bridge links cysteine 95 with cysteine 187. The helical transmembrane segment at 98 to 118 (QIFFVILFGATEFFLLAAMSY) threads the bilayer. Topologically, residues 119 to 137 (DRYVAICKPLHYVVIMNNR) are cytoplasmic. Residues 138-158 (VCTLLVLCCWVAGLMIIVPPL) form a helical membrane-spanning segment. At 159-195 (SLGLQLEFCDSNAIDHFSCDAGPLLKISCSDTWVIEQ) the chain is on the extracellular side. The chain crosses the membrane as a helical span at residues 196 to 215 (MVILMAVFALIITLVCVILS). Residues 216-235 (YLYIVRTILKFPSVQQRKKA) are Cytoplasmic-facing. Residues 236-256 (FSTCSSHMIVVSIAYGSCIFI) form a helical membrane-spanning segment. The Extracellular portion of the chain corresponds to 257 to 269 (YIKPSAKDEVAIN). Residues 270–290 (KGVSVLTTSVAPLLNPFIYTL) traverse the membrane as a helical segment. Residues 291–312 (RNKQVKQAFSDSIKRIAFLSKK) are Cytoplasmic-facing.

Belongs to the G-protein coupled receptor 1 family.

Its subcellular location is the cell membrane. Functionally, odorant receptor. This chain is Olfactory receptor 6C2 (OR6C2), found in Homo sapiens (Human).